The primary structure comprises 232 residues: Sugar fermentation stimulation protein homolog (232 aa).

Belongs to the SfsA family.

The protein is Sugar fermentation stimulation protein homolog of Acidithiobacillus ferrooxidans (strain ATCC 23270 / DSM 14882 / CIP 104768 / NCIMB 8455) (Ferrobacillus ferrooxidans (strain ATCC 23270)).